Consider the following 525-residue polypeptide: Glucose-6-phosphate isomerase (525 aa).

E356 acts as the Proton donor in catalysis. Catalysis depends on residues H387 and K502.

Belongs to the GPI family.

It is found in the cytoplasm. It catalyses the reaction alpha-D-glucose 6-phosphate = beta-D-fructose 6-phosphate. It participates in carbohydrate biosynthesis; gluconeogenesis. The protein operates within carbohydrate degradation; glycolysis; D-glyceraldehyde 3-phosphate and glycerone phosphate from D-glucose: step 2/4. In terms of biological role, catalyzes the reversible isomerization of glucose-6-phosphate to fructose-6-phosphate. The chain is Glucose-6-phosphate isomerase from Treponema denticola (strain ATCC 35405 / DSM 14222 / CIP 103919 / JCM 8153 / KCTC 15104).